Reading from the N-terminus, the 39-residue chain is Photosystem I reaction center subunit IX (39 aa).

Residues 4–24 (FLTTAPVVAAIWFTLTAGILI) form a helical membrane-spanning segment.

This sequence belongs to the PsaJ family.

It localises to the cellular thylakoid membrane. May help in the organization of the PsaE and PsaF subunits. This is Photosystem I reaction center subunit IX from Synechococcus sp. (strain CC9311).